The following is a 152-amino-acid chain: Endoribonuclease YbeY (152 aa).

Residues H117, H121, and H127 each coordinate Zn(2+).

It belongs to the endoribonuclease YbeY family. Requires Zn(2+) as cofactor.

Its subcellular location is the cytoplasm. Single strand-specific metallo-endoribonuclease involved in late-stage 70S ribosome quality control and in maturation of the 3' terminus of the 16S rRNA. The protein is Endoribonuclease YbeY of Sulfurihydrogenibium sp. (strain YO3AOP1).